The sequence spans 751 residues: Oxysterol-binding protein-related protein 11 (751 aa).

Position 1 is an N-acetylmethionine (Met-1). The interval 1–57 is disordered; it reads MQGGEPASVMKVSESEGKLEGLATAVTPNKNSGNSSCGGAISSSSSNSSRGGSAKGW. Phosphoserine is present on Ser-15. Thr-27 carries the post-translational modification Phosphothreonine. Positions 31–52 are enriched in low complexity; the sequence is NSGNSSCGGAISSSSSNSSRGG. In terms of domain architecture, PH spans 63 to 160; that stretch reads MESVNGYLMK…WVSRLQICTQ (98 aa). 6 positions are modified to phosphoserine: Ser-177, Ser-179, Ser-182, Ser-186, Ser-189, and Ser-194. Disordered regions lie at residues 475–497 and 694–716; these read SGVS…EEAP and EIDK…ERLR.

It belongs to the OSBP family. As to quaternary structure, heterodimer with OSBPL9.

It is found in the late endosome membrane. It localises to the golgi apparatus. The protein localises to the trans-Golgi network membrane. It carries out the reaction a 1,2-diacyl-sn-glycero-3-phospho-(1D-myo-inositol 4-phosphate)(out) + a 1,2-diacyl-sn-glycero-3-phospho-L-serine(in) = a 1,2-diacyl-sn-glycero-3-phospho-(1D-myo-inositol 4-phosphate)(in) + a 1,2-diacyl-sn-glycero-3-phospho-L-serine(out). Its function is as follows. Plays a role in regulating ADIPOQ and FABP4 levels in differentiating adipocytes and is also involved in regulation of adipocyte triglyceride storage. Weakly binds 25-hydroxycholesterol. Interacts with OSBPL9 to function as lipid transfer proteins. Together they form a heterodimer that localizes at the ER-trans-Golgi membrane contact sites, and exchanges phosphatidylserine (1,2-diacyl-sn-glycero-3-phospho-L-serine, PS) for phosphatidylinositol-4-phosphate (1,2-diacyl-sn-glycero-3-phospho-(1D-myo-inositol 4-phosphate), PI(4)P) between the two organelles, a step that is critical for sphingomyelin synthesis in the Golgi complex. In Mus musculus (Mouse), this protein is Oxysterol-binding protein-related protein 11 (Osbpl11).